Here is a 182-residue protein sequence, read N- to C-terminus: CDP-diacylglycerol--glycerol-3-phosphate 3-phosphatidyltransferase (182 aa).

Residues 2–12 lie on the Cytoplasmic side of the membrane; sequence QFNIPTLLTLF. A helical transmembrane segment spans residues 13–37; the sequence is RVILIPFFVLVFYLPVTWSPFAAAL. Topologically, residues 38–60 are periplasmic; the sequence is IFCVAAVTDWFDGFLARRWNQST. Residues 61–81 form a helical membrane-spanning segment; the sequence is RFGAFLDPVADKVLVAIAMVL. At 82 to 86 the chain is on the cytoplasmic side; sequence VTEHY. A helical transmembrane segment spans residues 87 to 107; it reads HSWWVTLPAATMIAREIIISA. Residues 108–145 lie on the Periplasmic side of the membrane; sequence LREWMAELGKRSSVAVSWIGKVKTTAQMVALAWLLWRP. A helical transmembrane segment spans residues 146-168; it reads NIWVEYAGIALFFVAAVLTLWSM. At 169 to 181 the chain is on the cytoplasmic side; that stretch reads LQYLSAARADLLD.

Belongs to the CDP-alcohol phosphatidyltransferase class-I family.

It is found in the cell inner membrane. It carries out the reaction a CDP-1,2-diacyl-sn-glycerol + sn-glycerol 3-phosphate = a 1,2-diacyl-sn-glycero-3-phospho-(1'-sn-glycero-3'-phosphate) + CMP + H(+). It participates in phospholipid metabolism; phosphatidylglycerol biosynthesis; phosphatidylglycerol from CDP-diacylglycerol: step 1/2. Functionally, catalyzes the conversion of cytidine diphosphate diacylglycerol (CDP-DG) and glycerol 3-phosphate into phosphatidylglycerol. Essential for the synthesis of anionic phospholipids, thereby playing a role in balancing the ratio of zwitterionic and anionic phospholipids, which is thought to be important for normal membrane function. This chain is CDP-diacylglycerol--glycerol-3-phosphate 3-phosphatidyltransferase, found in Shigella sonnei (strain Ss046).